The sequence spans 330 residues: Phosphate acyltransferase (330 aa).

The protein belongs to the PlsX family. As to quaternary structure, homodimer. Probably interacts with PlsY.

It localises to the cytoplasm. It catalyses the reaction a fatty acyl-[ACP] + phosphate = an acyl phosphate + holo-[ACP]. Its pathway is lipid metabolism; phospholipid metabolism. Its function is as follows. Catalyzes the reversible formation of acyl-phosphate (acyl-PO(4)) from acyl-[acyl-carrier-protein] (acyl-ACP). This enzyme utilizes acyl-ACP as fatty acyl donor, but not acyl-CoA. The protein is Phosphate acyltransferase of Bacillus anthracis (strain A0248).